The following is a 186-amino-acid chain: Potassium-transporting ATPase KdpC subunit (186 aa).

Residues 10-30 form a helical membrane-spanning segment; sequence LTIITMVLCGFLFPLAITLIG.

It belongs to the KdpC family. As to quaternary structure, the system is composed of three essential subunits: KdpA, KdpB and KdpC.

The protein resides in the cell membrane. Its function is as follows. Part of the high-affinity ATP-driven potassium transport (or Kdp) system, which catalyzes the hydrolysis of ATP coupled with the electrogenic transport of potassium into the cytoplasm. This subunit acts as a catalytic chaperone that increases the ATP-binding affinity of the ATP-hydrolyzing subunit KdpB by the formation of a transient KdpB/KdpC/ATP ternary complex. The sequence is that of Potassium-transporting ATPase KdpC subunit from Staphylococcus aureus (strain bovine RF122 / ET3-1).